A 375-amino-acid polypeptide reads, in one-letter code: Chaperone protein DnaJ (375 aa).

Residues 5–70 (DFYETLGVAK…QKRAAYDRYG (66 aa)) form the J domain. The segment at 136 to 214 (GKTAQIRVPT…CHGQGRVTEE (79 aa)) adopts a CR-type zinc-finger fold. 8 residues coordinate Zn(2+): cysteine 149, cysteine 152, cysteine 166, cysteine 169, cysteine 188, cysteine 191, cysteine 202, and cysteine 205. 4 CXXCXGXG motif repeats span residues 149 to 156 (CDVCSGSG), 166 to 173 (CGTCQGTG), 188 to 195 (CPTCHGRG), and 202 to 209 (CPKCHGQG).

Belongs to the DnaJ family. In terms of assembly, homodimer. Zn(2+) is required as a cofactor.

It is found in the cytoplasm. In terms of biological role, participates actively in the response to hyperosmotic and heat shock by preventing the aggregation of stress-denatured proteins and by disaggregating proteins, also in an autonomous, DnaK-independent fashion. Unfolded proteins bind initially to DnaJ; upon interaction with the DnaJ-bound protein, DnaK hydrolyzes its bound ATP, resulting in the formation of a stable complex. GrpE releases ADP from DnaK; ATP binding to DnaK triggers the release of the substrate protein, thus completing the reaction cycle. Several rounds of ATP-dependent interactions between DnaJ, DnaK and GrpE are required for fully efficient folding. Also involved, together with DnaK and GrpE, in the DNA replication of plasmids through activation of initiation proteins. The chain is Chaperone protein DnaJ from Rhizobium etli (strain ATCC 51251 / DSM 11541 / JCM 21823 / NBRC 15573 / CFN 42).